The following is a 218-amino-acid chain: UPF0598 protein C8orf82 homolog (218 aa).

It belongs to the UPF0598 family.

This chain is UPF0598 protein C8orf82 homolog, found in Mus musculus (Mouse).